The chain runs to 403 residues: Serine/threonine transporter SstT (403 aa).

9 helical membrane passes run 14 to 34 (VTQI…APAI), 44 to 64 (VFVS…VMAS), 79 to 99 (ILWL…VASM), 138 to 158 (ALLN…GVAL), 175 to 195 (GVTL…FGLV), 214 to 234 (LAVL…LIVF), 295 to 315 (MAGA…TLGI), 327 to 347 (VVAA…LLLI), and 353 to 373 (LFGI…IIGV).

Belongs to the dicarboxylate/amino acid:cation symporter (DAACS) (TC 2.A.23) family.

It localises to the cell inner membrane. It catalyses the reaction L-serine(in) + Na(+)(in) = L-serine(out) + Na(+)(out). The enzyme catalyses L-threonine(in) + Na(+)(in) = L-threonine(out) + Na(+)(out). Its function is as follows. Involved in the import of serine and threonine into the cell, with the concomitant import of sodium (symport system). The sequence is that of Serine/threonine transporter SstT from Pseudomonas putida (strain ATCC 700007 / DSM 6899 / JCM 31910 / BCRC 17059 / LMG 24140 / F1).